Reading from the N-terminus, the 789-residue chain is Ribosomal protein S6 kinase alpha-5 (789 aa).

The Protein kinase 1 domain occupies 39-308 (FELLKVLGTG…ADEIKQHPFF (270 aa)). Residues 45–53 (LGTGAYGKV) and Lys71 each bind ATP. Catalysis depends on Asp167, which acts as the Proton acceptor. Ser202 is modified (phosphoserine; by autocatalysis). Residues 309-377 (QNINWDDLAA…VAPSILFKRN (69 aa)) form the AGC-kinase C-terminal domain. Ser350 carries the post-translational modification Phosphoserine. A phosphoserine; by autocatalysis mark is found at Ser366 and Ser371. Residues 416 to 677 (DLKEKPLGEG…MSSLRYNEWL (262 aa)) enclose the Protein kinase 2 domain. ATP is bound by residues 422–430 (LGEGSFSIC) and Lys445. The active-site Proton acceptor is the Asp534. Phosphothreonine is present on residues Thr571 and Thr690. Positions 731-789 (AKRRKMKKTSTSTETRSSSSESSHSSSSHSHGKTTPTKTLQPTNPTDSNNPETIFQFSD) are disordered. Residues 739 to 769 (TSTSTETRSSSSESSHSSSSHSHGKTTPTKT) show a composition bias toward low complexity. Phosphoserine; by autocatalysis occurs at positions 740, 742, and 748. Over residues 770-789 (LQPTNPTDSNNPETIFQFSD) the composition is skewed to polar residues.

It belongs to the protein kinase superfamily. AGC Ser/Thr protein kinase family. S6 kinase subfamily. Requires Mg(2+) as cofactor. Post-translationally, ser-366 and Thr-571 phosphorylation is required for kinase activity. Ser-366 and Ser-202 are autophosphorylated by the C-terminal kinase domain, and their phosphorylation is essential for the catalytic activity of the N-terminal kinase domain. Phosphorylated at Ser-350, Thr-571 and Thr-690 by MAP kinases. Autophosphorylated at Ser-740, Ser-742 and Ser-748 by the N-terminal kinase domain. As to expression, widely expressed with high levels in heart, brain and placenta. Less abundant in lung, kidney and liver.

The protein resides in the nucleus. It carries out the reaction L-seryl-[protein] + ATP = O-phospho-L-seryl-[protein] + ADP + H(+). The enzyme catalyses L-threonyl-[protein] + ATP = O-phospho-L-threonyl-[protein] + ADP + H(+). With respect to regulation, activated by phosphorylation at Ser-350, Thr-571 and Thr-690 by MAP kinases, and by further autophosphorylation of Ser-202, Ser-366 and Ser-371 by the activated C-terminal kinase domain. The active N-terminal kinase domain finally phosphorylates downstream substrates, as well as Ser-740, Ser-742 and Ser-748 in its own C-terminal region. Functionally, serine/threonine-protein kinase that is required for the mitogen or stress-induced phosphorylation of the transcription factors CREB1 and ATF1 and that contributes to gene activation by histone phosphorylation. Phosphorylates CREB1 and ATF1 in response to mitogenic or stress stimuli such as UV-C irradiation, epidermal growth factor (EGF) and anisomycin. Directly represses transcription via phosphorylation of 'Ser-1' of histone H2A. Phosphorylates 'Ser-10' of histone H3 in response to mitogenics, stress stimuli and EGF, which results in the transcriptional activation of several immediate early genes, including proto-oncogenes c-fos/FOS and c-jun/JUN. May also phosphorylate 'Ser-28' of histone H3. Mediates the mitogen- and stress-induced phosphorylation of high mobility group protein 1 (HMGN1/HMG14). This is Ribosomal protein S6 kinase alpha-5 (RPS6KA5) from Gallus gallus (Chicken).